The primary structure comprises 43 residues: DeltaKappa-actitoxin-Avd4b (43 aa).

Intrachain disulfides connect C4-C39, C6-C32, and C22-C40.

It belongs to the sea anemone type 3 (BDS) potassium channel toxin family.

Its subcellular location is the secreted. It localises to the nematocyst. In terms of biological role, acts as a gating modifier on both Kv and Nav ion channels. Voltage-dependently inhibits voltage-gated potassium channels Kv3 (Kv3.1/KCNC1, Kv3.2/KCNC2 and Kv3.4/KCNC4). Slows inactivation of the voltage-gated sodium channel Nav1.7/SCN9A. Inhibits all Kv3.1, Kv3.2 and Kv3.4 by about 50% when tested at a voltage of +40 mV. May act by binding residues in voltage-sensing domains S3b and S4 of Kv3. Tests have been done on human Nav1.7/SCN9A and rat SCG neurons that mostly carry Nav1.7 channels (EC(50)=300 nM). This toxin also reduces blood pressure. The polypeptide is DeltaKappa-actitoxin-Avd4b (Anemonia sulcata (Mediterranean snakelocks sea anemone)).